We begin with the raw amino-acid sequence, 220 residues long: Chaperone protein TorD (220 aa).

It belongs to the TorD/DmsD family. TorD subfamily.

Its subcellular location is the cytoplasm. Its function is as follows. Involved in the biogenesis of TorA. Acts on TorA before the insertion of the molybdenum cofactor and, as a result, probably favors a conformation of the apoenzyme that is competent for acquiring the cofactor. This Vibrio cholerae serotype O1 (strain ATCC 39315 / El Tor Inaba N16961) protein is Chaperone protein TorD.